Consider the following 152-residue polypeptide: Putative NrdI-like protein (152 aa).

This sequence belongs to the NrdI family.

The sequence is that of Putative NrdI-like protein from Streptococcus pyogenes serotype M18 (strain MGAS8232).